Reading from the N-terminus, the 106-residue chain is Large ribosomal subunit protein bL31B (106 aa).

Residues 85–106 (PVQVAEEPVAKGKKKPSLKKKK) are disordered. A compositionally biased stretch (basic residues) spans 95 to 106 (KGKKKPSLKKKK).

The protein belongs to the bacterial ribosomal protein bL31 family. Type B subfamily. Part of the 50S ribosomal subunit.

The polypeptide is Large ribosomal subunit protein bL31B (Chlamydia felis (strain Fe/C-56) (Chlamydophila felis)).